A 141-amino-acid chain; its full sequence is Hemoglobin subunit alpha (141 aa).

The Globin domain maps to 1 to 141 (VLSPADKANI…VSTVLTSKYR (141 aa)). Phosphoserine is present on Ser-3. Lys-7 and Lys-11 each carry N6-succinyllysine. Position 16 is an N6-acetyllysine; alternate (Lys-16). At Lys-16 the chain carries N6-succinyllysine; alternate. Tyr-24 carries the post-translational modification Phosphotyrosine. Ser-35 carries the post-translational modification Phosphoserine. Lys-40 carries the post-translational modification N6-succinyllysine. Ser-49 carries the phosphoserine modification. His-58 provides a ligand contact to O2. Heme b is bound at residue His-87. Ser-102 is subject to Phosphoserine. Thr-108 is modified (phosphothreonine). Ser-124 and Ser-131 each carry phosphoserine. 2 positions are modified to phosphothreonine: Thr-134 and Thr-137. Position 138 is a phosphoserine (Ser-138).

Belongs to the globin family. In terms of assembly, heterotetramer of two alpha chains and two beta chains. As to expression, red blood cells.

Functionally, involved in oxygen transport from the lung to the various peripheral tissues. Its function is as follows. Hemopressin acts as an antagonist peptide of the cannabinoid receptor CNR1. Hemopressin-binding efficiently blocks cannabinoid receptor CNR1 and subsequent signaling. This Meles meles (Eurasian badger) protein is Hemoglobin subunit alpha (HBA).